The primary structure comprises 222 residues: Lipid transferase CIDEC (222 aa).

Residues 1–19 (MAMYTAVSTSVVTQQQLSE) show a composition bias toward polar residues. Disordered stretches follow at residues 1-33 (MAMYTAVSTSVVTQQQLSEPSAEAPRARPCRVT) and 203-222 (EQPPKSKAASLIPTSLKMLQ). Positions 1–33 (MAMYTAVSTSVVTQQQLSEPSAEAPRARPCRVT) are required for liquid-liquid phase separation (LLPS). Residues 26 to 103 (RARPCRVTTA…VLHKGQKWQP (78 aa)) form the CIDE-N domain.

Belongs to the CIDE family. In terms of assembly, homodimer. Homooligomer; undergoes liquid-liquid phase separation (LLPS) via its N-terminus, facilitating lipid droplet fusion, occurs at the lipid droplet contact sites. Interacts with CIDEA. Interacts with PLIN1. Interacts with NFAT5; this interaction is direct and retains NFAT5 in the cytoplasm. Interacts with CEBPB. Interacts with isoform CLSTN3beta of CLSTN3; inhibiting the lipid transferase activity of CIDEC. In terms of processing, ubiquitinated and targeted to proteasomal degradation, resulting in a short half-life (about 15 minutes in 3T3-L1 cells). Protein stability depends on triaclyglycerol synthesis, fatty acid availability and lipid droplet formation.

It localises to the lipid droplet. The protein resides in the endoplasmic reticulum. It is found in the nucleus. It catalyses the reaction a triacyl-sn-glycerol(in) = a triacyl-sn-glycerol(out). Lipid transferase specifically expressed in white adipose tissue, which promotes unilocular lipid droplet formation by mediating lipid droplet fusion. Lipid droplet fusion promotes their enlargement, restricting lipolysis and favoring lipid storage. Localizes on the lipid droplet surface, at focal contact sites between lipid droplets, and mediates atypical lipid droplet fusion by undergoing liquid-liquid phase separation (LLPS) and promoting directional net neutral lipid transfer from the smaller to larger lipid droplets. The transfer direction may be driven by the internal pressure difference between the contacting lipid droplet pair. Its role in neutral lipid transfer and lipid droplet enlargement is activated by the interaction with PLIN1. May also act as a CEBPB coactivator in the white adipose tissue to control the expression of a subset of CEBPB downstream target genes, including SOCS1, SOCS3, TGFB1, TGFBR1, ID2 and XDH. When overexpressed in preadipocytes, induces apoptosis or increases cell susceptibility to apoptosis induced by serum deprivation or TGFB treatment. This is Lipid transferase CIDEC from Bos taurus (Bovine).